The sequence spans 183 residues: Endoribonuclease YbeY (183 aa).

Zn(2+)-binding residues include His-142, His-146, and His-152.

Belongs to the endoribonuclease YbeY family. Zn(2+) serves as cofactor.

The protein localises to the cytoplasm. Single strand-specific metallo-endoribonuclease involved in late-stage 70S ribosome quality control and in maturation of the 3' terminus of the 16S rRNA. The protein is Endoribonuclease YbeY of Trichodesmium erythraeum (strain IMS101).